Here is a 159-residue protein sequence, read N- to C-terminus: Eukaryotic translation initiation factor 5A (159 aa).

Residue lysine 55 is modified to Hypusine.

This sequence belongs to the eIF-5A family. In terms of processing, lys-55 undergoes hypusination, a unique post-translational modification that consists in the addition of a butylamino group from spermidine to lysine side chain, leading to the formation of the unusual amino acid hypusine. eIF-5As are the only known proteins to undergo this modification, which is essential for their function.

The protein resides in the cytoplasm. Its function is as follows. Translation factor that promotes translation elongation and termination, particularly upon ribosome stalling at specific amino acid sequence contexts. Binds between the exit (E) and peptidyl (P) site of the ribosome and promotes rescue of stalled ribosome: specifically required for efficient translation of polyproline-containing peptides as well as other motifs that stall the ribosome. Acts as a ribosome quality control (RQC) cofactor by joining the RQC complex to facilitate peptidyl transfer during CAT tailing step. In Dictyostelium discoideum (Social amoeba), this protein is Eukaryotic translation initiation factor 5A (eif5a).